A 155-amino-acid chain; its full sequence is Large ribosomal subunit protein uL30 (155 aa).

This sequence belongs to the universal ribosomal protein uL30 family. As to quaternary structure, part of the 50S ribosomal subunit.

The chain is Large ribosomal subunit protein uL30 from Pyrococcus furiosus (strain ATCC 43587 / DSM 3638 / JCM 8422 / Vc1).